We begin with the raw amino-acid sequence, 356 residues long: Guanine nucleotide-binding protein alpha-2 subunit (356 aa).

Glycine 2 carries N-myristoyl glycine lipidation. Residue cysteine 4 is the site of S-palmitoyl cysteine attachment. In terms of domain architecture, G-alpha spans 32–356; that stretch reads RTVKLLLLGA…QSNLHKSGLY (325 aa). A G1 motif region spans residues 35 to 48; it reads KLLLLGAGECGKST. GTP contacts are provided by glutamate 43, glycine 45, lysine 46, serine 47, threonine 48, aspartate 153, leucine 178, threonine 184, glycine 206, asparagine 272, lysine 273, aspartate 275, and alanine 328. Serine 47 contacts Mg(2+). Positions 176 to 184 are G2 motif; that stretch reads DTLLLRTKT. Threonine 184 contacts Mg(2+). The G3 motif stretch occupies residues 199-208; it reads FRVFDVGGQR. A G4 motif region spans residues 268–275; that stretch reads ILFLNKKD. The G5 motif stretch occupies residues 326–331; the sequence is TCATDT.

The protein belongs to the G-alpha family. G(q) subfamily. In terms of assembly, g proteins are composed of 3 units; alpha, beta and gamma. The alpha chain contains the guanine nucleotide binding site. It depends on Mg(2+) as a cofactor.

Its function is as follows. Guanine nucleotide-binding proteins (G proteins) are involved as modulators or transducers in various transmembrane signaling systems. Involved in behavioral responses to P.aeruginosa by controlling the expression of daf-7, a member of the TGF-beta family, in ASJ sensory neurons. The sequence is that of Guanine nucleotide-binding protein alpha-2 subunit (gpa-2) from Caenorhabditis elegans.